The primary structure comprises 444 residues: Phosphoglucosamine mutase (444 aa).

Serine 103 acts as the Phosphoserine intermediate in catalysis. Positions 103, 241, 243, and 245 each coordinate Mg(2+). At serine 103 the chain carries Phosphoserine.

Belongs to the phosphohexose mutase family. Mg(2+) serves as cofactor. Post-translationally, activated by phosphorylation.

It carries out the reaction alpha-D-glucosamine 1-phosphate = D-glucosamine 6-phosphate. Catalyzes the conversion of glucosamine-6-phosphate to glucosamine-1-phosphate. This Deinococcus geothermalis (strain DSM 11300 / CIP 105573 / AG-3a) protein is Phosphoglucosamine mutase.